The following is a 511-amino-acid chain: Anthranilate synthase component 1 (511 aa).

Positions 1-36 are disordered; it reads MTTHAAEAPTTDPQGAPGSQKTPDATEAEEAARATV. The segment covering 11-23 has biased composition (polar residues); it reads TDPQGAPGSQKTP. L-tryptophan-binding positions include S84 and 292–294; that span reads PYM. Position 328-329 (328-329) interacts with chorismate; the sequence is GT. E355 contributes to the Mg(2+) binding site. Residues Y443, R463, 477-479, and G479 each bind chorismate; that span reads GAG. E492 contributes to the Mg(2+) binding site.

Belongs to the anthranilate synthase component I family. As to quaternary structure, heterotetramer consisting of two non-identical subunits: a beta subunit (TrpG) and a large alpha subunit (TrpE). The cofactor is Mg(2+).

It carries out the reaction chorismate + L-glutamine = anthranilate + pyruvate + L-glutamate + H(+). It participates in amino-acid biosynthesis; L-tryptophan biosynthesis; L-tryptophan from chorismate: step 1/5. Its activity is regulated as follows. Feedback inhibited by tryptophan. Part of a heterotetrameric complex that catalyzes the two-step biosynthesis of anthranilate, an intermediate in the biosynthesis of L-tryptophan. In the first step, the glutamine-binding beta subunit (TrpG) of anthranilate synthase (AS) provides the glutamine amidotransferase activity which generates ammonia as a substrate that, along with chorismate, is used in the second step, catalyzed by the large alpha subunit of AS (TrpE) to produce anthranilate. In the absence of TrpG, TrpE can synthesize anthranilate directly from chorismate and high concentrations of ammonia. The polypeptide is Anthranilate synthase component 1 (trpE) (Streptomyces coelicolor (strain ATCC BAA-471 / A3(2) / M145)).